Consider the following 262-residue polypeptide: Hemin import ATP-binding protein HmuV (262 aa).

Residues 1–247 form the ABC transporter domain; sequence MRNLTLQRGR…ERIKQIFAFD (247 aa). ATP is bound at residue 31–38; that stretch reads GPNGTGKS.

It belongs to the ABC transporter superfamily. Heme (hemin) importer (TC 3.A.1.14.5) family. In terms of assembly, the complex is composed of two ATP-binding proteins (HmuV), two transmembrane proteins (HmuU) and a solute-binding protein (HmuT).

The protein localises to the cell inner membrane. In terms of biological role, part of the ABC transporter complex HmuTUV involved in hemin import. Responsible for energy coupling to the transport system. In Plesiomonas shigelloides (Aeromonas shigelloides), this protein is Hemin import ATP-binding protein HmuV.